A 161-amino-acid chain; its full sequence is SsrA-binding protein (161 aa).

The protein belongs to the SmpB family.

Its subcellular location is the cytoplasm. In terms of biological role, required for rescue of stalled ribosomes mediated by trans-translation. Binds to transfer-messenger RNA (tmRNA), required for stable association of tmRNA with ribosomes. tmRNA and SmpB together mimic tRNA shape, replacing the anticodon stem-loop with SmpB. tmRNA is encoded by the ssrA gene; the 2 termini fold to resemble tRNA(Ala) and it encodes a 'tag peptide', a short internal open reading frame. During trans-translation Ala-aminoacylated tmRNA acts like a tRNA, entering the A-site of stalled ribosomes, displacing the stalled mRNA. The ribosome then switches to translate the ORF on the tmRNA; the nascent peptide is terminated with the 'tag peptide' encoded by the tmRNA and targeted for degradation. The ribosome is freed to recommence translation, which seems to be the essential function of trans-translation. The protein is SsrA-binding protein of Vibrio parahaemolyticus serotype O3:K6 (strain RIMD 2210633).